Reading from the N-terminus, the 340-residue chain is Lipoyl synthase (340 aa).

7 residues coordinate [4Fe-4S] cluster: Cys83, Cys88, Cys94, Cys109, Cys113, Cys116, and Ser323. One can recognise a Radical SAM core domain in the interval Phe95 to Lys312.

The protein belongs to the radical SAM superfamily. Lipoyl synthase family. [4Fe-4S] cluster serves as cofactor.

It is found in the cytoplasm. It catalyses the reaction [[Fe-S] cluster scaffold protein carrying a second [4Fe-4S](2+) cluster] + N(6)-octanoyl-L-lysyl-[protein] + 2 oxidized [2Fe-2S]-[ferredoxin] + 2 S-adenosyl-L-methionine + 4 H(+) = [[Fe-S] cluster scaffold protein] + N(6)-[(R)-dihydrolipoyl]-L-lysyl-[protein] + 4 Fe(3+) + 2 hydrogen sulfide + 2 5'-deoxyadenosine + 2 L-methionine + 2 reduced [2Fe-2S]-[ferredoxin]. The protein operates within protein modification; protein lipoylation via endogenous pathway; protein N(6)-(lipoyl)lysine from octanoyl-[acyl-carrier-protein]: step 2/2. Its function is as follows. Catalyzes the radical-mediated insertion of two sulfur atoms into the C-6 and C-8 positions of the octanoyl moiety bound to the lipoyl domains of lipoate-dependent enzymes, thereby converting the octanoylated domains into lipoylated derivatives. The sequence is that of Lipoyl synthase from Pseudomonas fluorescens (strain Pf0-1).